The primary structure comprises 204 residues: Holliday junction branch migration complex subunit RuvA (204 aa).

The segment at Met-1–Ala-64 is domain I. Residues Gln-65 to Glu-143 form a domain II region. Residues Ser-144–Ser-155 are flexible linker. The tract at residues His-156–Leu-204 is domain III.

It belongs to the RuvA family. As to quaternary structure, homotetramer. Forms an RuvA(8)-RuvB(12)-Holliday junction (HJ) complex. HJ DNA is sandwiched between 2 RuvA tetramers; dsDNA enters through RuvA and exits via RuvB. An RuvB hexamer assembles on each DNA strand where it exits the tetramer. Each RuvB hexamer is contacted by two RuvA subunits (via domain III) on 2 adjacent RuvB subunits; this complex drives branch migration. In the full resolvosome a probable DNA-RuvA(4)-RuvB(12)-RuvC(2) complex forms which resolves the HJ.

The protein localises to the cytoplasm. In terms of biological role, the RuvA-RuvB-RuvC complex processes Holliday junction (HJ) DNA during genetic recombination and DNA repair, while the RuvA-RuvB complex plays an important role in the rescue of blocked DNA replication forks via replication fork reversal (RFR). RuvA specifically binds to HJ cruciform DNA, conferring on it an open structure. The RuvB hexamer acts as an ATP-dependent pump, pulling dsDNA into and through the RuvAB complex. HJ branch migration allows RuvC to scan DNA until it finds its consensus sequence, where it cleaves and resolves the cruciform DNA. This Haemophilus influenzae (strain ATCC 51907 / DSM 11121 / KW20 / Rd) protein is Holliday junction branch migration complex subunit RuvA.